A 355-amino-acid chain; its full sequence is SH3 domain-containing protein Dlish (355 aa).

SH3 domains lie at Ser57 to Thr117, Glu183 to Ser243, and Tyr287 to Met352.

In terms of assembly, interacts with dachs (via C-terminus); the interaction is direct. Interacts (via N-terminus including SH3 domain 1) with palmitoyltransferase app; this leads to palmitoylation of Dlish by app. Also interacts with dco, ft, ft-regulated E3 ubiquitin ligase Fbxl7, F-box protein slmb and SCF E3 ubiquitin-protein ligase complex component Cul1. Palmitoylated by app.

Its subcellular location is the cytoplasm. It localises to the cell cortex. Required for the apical cell cortex localization, total cellular level and full activity of dachs. This is SH3 domain-containing protein Dlish from Drosophila melanogaster (Fruit fly).